The primary structure comprises 363 residues: uncharacterized protein (363 aa).

S-adenosyl-L-methionine is bound by residues Gln-198, Tyr-225, Glu-246, and Asp-291. The active-site Nucleophile is the Cys-318.

Belongs to the class I-like SAM-binding methyltransferase superfamily. RNA M5U methyltransferase family.

This is an uncharacterized protein from Mycoplasma mobile (strain ATCC 43663 / 163K / NCTC 11711) (Mesomycoplasma mobile).